Reading from the N-terminus, the 332-residue chain is Ketol-acid reductoisomerase (NADP(+)) (332 aa).

Residues 1–182 (MAQVWKDAEI…GSARAGLIKT (182 aa)) enclose the KARI N-terminal Rossmann domain. Residues 25-28 (YGIQ), K48, S53, and 83-86 (DMIQ) contribute to the NADP(+) site. The active site involves H108. NADP(+) is bound at residue G134. In terms of domain architecture, KARI C-terminal knotted spans 183 to 329 (TFKEEVETDW…RKMRKMMWPD (147 aa)). Mg(2+)-binding residues include D191, E195, E227, and E231. Substrate is bound at residue S252.

The protein belongs to the ketol-acid reductoisomerase family. Mg(2+) is required as a cofactor.

It carries out the reaction (2R)-2,3-dihydroxy-3-methylbutanoate + NADP(+) = (2S)-2-acetolactate + NADPH + H(+). The catalysed reaction is (2R,3R)-2,3-dihydroxy-3-methylpentanoate + NADP(+) = (S)-2-ethyl-2-hydroxy-3-oxobutanoate + NADPH + H(+). Its pathway is amino-acid biosynthesis; L-isoleucine biosynthesis; L-isoleucine from 2-oxobutanoate: step 2/4. It participates in amino-acid biosynthesis; L-valine biosynthesis; L-valine from pyruvate: step 2/4. In terms of biological role, involved in the biosynthesis of branched-chain amino acids (BCAA). Catalyzes an alkyl-migration followed by a ketol-acid reduction of (S)-2-acetolactate (S2AL) to yield (R)-2,3-dihydroxy-isovalerate. In the isomerase reaction, S2AL is rearranged via a Mg-dependent methyl migration to produce 3-hydroxy-3-methyl-2-ketobutyrate (HMKB). In the reductase reaction, this 2-ketoacid undergoes a metal-dependent reduction by NADPH to yield (R)-2,3-dihydroxy-isovalerate. The chain is Ketol-acid reductoisomerase (NADP(+)) from Cenarchaeum symbiosum (strain A).